A 1192-amino-acid polypeptide reads, in one-letter code: MPLQFMYGPASIDHLEGIADRVIELQQQNVGQPVYYLVPNHIKFQSEIQLLQKLRQRRDVKSHIFAEKDVQILSISRLAWFFLRNSSIYQYPRVTSSSSNMLLYRVILEHQDELTLFHNIDAQLGLVQKIATQLAEFKQGNVGPDELGRVAENIAENSDAGMDIKAKLHDLGIIYSAYEEEIQSRFIDASDITHTLTDELSKMDLSGQSFIISGFSNFTAEEMSLIQALMKANGNVVIDLIMDKFPLYEKVSENSLFFENEKIIFKFNAWAHENKVKSLEPVRLHRVRVNSDLLKLEKYWIESSEGQVGGSKQENNACVTIFQANSRYAEVEHVATLIRQKMAKDPSLKFSDFSVLTRHLSDYSTIIKPIFDQMELPIFYDLQIAMKDHPLLELINALFDIRAHHFRYEDVMRLLKTGLLFPETEDDPHGMDFFKSVHITENYVLKQGIYGDRWLQKKDWKYSRFNDIDEEKQTDEEIEINQRINTVKNYVAETVVPFFNQLSTATTGVEAAKALYDFLIKNGIDQCLLAWRDQWIEEGRLAKAAEPEQTWETFIQMLDEFVDILGDQPFDPDNFMGLLNAGFEGATYSQIPSTLDQILVSESGMVQMVDRKIVFIIGATDRVMPEQIQDNDFLNQDGKNQIDPFLDDDQFLRISNDRQMRQEPYLNYLTFMIGSDELIFSYPKSGNDGVELKISPYVERIGKHFGIIAQSLPSRPTTEPVRLDPPFIELFIGSNRSTLSHLIQYARAMHEAKSEADPRWNLIYTILRQSTLGSLTDQLLSSLEYKNIPEKLKPEIVEGLYGDTIYASVSKLEEFYRNEYSYFLKYGLKLQERETSDLSPADTGQYFHAAMDKLIKMITTENLNFNEVNQEQIEQIAKRLVQQMEQDQQFDQFNGTYRMGFLRKQLDRTVQAMVEAIFKQLARTRMRPIASEQLFGQIGSQSGLPALNFKVGEGKEINVRGKIDRIDKIEIGDKDYLGIVDYKSSNRKFDFTDAYYGLAMQMLMYLDVVQRNKEKIDPATKAEISSALYMIFQYPLLKSKEWKGSDANQLNQSIFKKFSLNGFLLKDEELIKEIDKTIEDTRKSDVFPIAFTTKGTLTKVSENSILSEDELQNLIKHAELKVREAGEKIFKGELDMNPVQWPNRRTVMEYSPYKDVMQFDAMLPENNYRIIEKLDKDKVLEQIREEQEKNGR.

The protein belongs to the helicase family. AddB/RexB type 2 subfamily. As to quaternary structure, heterodimer of AddA and RexB. It depends on Mg(2+) as a cofactor.

Functionally, the heterodimer acts as both an ATP-dependent DNA helicase and an ATP-dependent, dual-direction single-stranded exonuclease. Recognizes the chi site generating a DNA molecule suitable for the initiation of homologous recombination. This subunit has 5' -&gt; 3' nuclease activity but not helicase activity. The protein is ATP-dependent helicase/deoxyribonuclease subunit B of Pediococcus pentosaceus (strain ATCC 25745 / CCUG 21536 / LMG 10740 / 183-1w).